The primary structure comprises 397 residues: UDP-GlcNAc:betaGal beta-1,3-N-acetylglucosaminyltransferase 8 (397 aa).

Residues 1–6 lie on the Cytoplasmic side of the membrane; the sequence is MRCPKC. Residues 7–23 traverse the membrane as a helical; Signal-anchor for type II membrane protein segment; the sequence is LLCLSALLTLLGLKVYI. Residues 24 to 397 lie on the Lumenal side of the membrane; the sequence is EWTSESRLSK…KQLQDPRLQC (374 aa). A disordered region spans residues 33-58; that stretch reads KAYPSPRGTPPSPTPANPEPTLPANL. Residues 39-53 are compositionally biased toward pro residues; sequence RGTPPSPTPANPEPT. Asn57 carries N-linked (GlcNAc...) asparagine glycosylation.

The protein belongs to the glycosyltransferase 31 family. Interacts with B3GNT2; this interaction greatly increases B3GNT2 catalytic activity, independently of B3GNT8 enzymatic activity. As to expression, highly expressed in small intestine, pancreas, spleen, bone marrow, lung, throat, and ileum, and weakly in fetal brain, cerebellum, heart, liver, tongue, breast, uteri, and testis. Not detected in colon. Differentially expressed in human tumor cell lines.

The protein localises to the golgi apparatus membrane. Its pathway is protein modification; protein glycosylation. Functionally, beta-1,3-N-acetylglucosaminyltransferase that plays a role in the elongation of specific branch structures of multiantennary N-glycans. Has strong activity towards tetraantennary N-glycans and 2,6 triantennary glycans. In Homo sapiens (Human), this protein is UDP-GlcNAc:betaGal beta-1,3-N-acetylglucosaminyltransferase 8.